The primary structure comprises 151 residues: Transcriptional regulator MraZ (151 aa).

2 consecutive SpoVT-AbrB domains span residues 5–52 (ANAI…PLSE) and 81–124 (AVDL…DEDA).

This sequence belongs to the MraZ family. Forms oligomers.

It localises to the cytoplasm. The protein localises to the nucleoid. The protein is Transcriptional regulator MraZ of Pseudomonas syringae pv. tomato (strain ATCC BAA-871 / DC3000).